The sequence spans 215 residues: UPF0319 protein VV2_0960 (215 aa).

The first 21 residues, 1 to 21 (MNIIKPLTCILAMSISGLATA), serve as a signal peptide directing secretion.

It belongs to the UPF0319 family.

This chain is UPF0319 protein VV2_0960, found in Vibrio vulnificus (strain CMCP6).